A 254-amino-acid chain; its full sequence is tRNA (guanine-N(7)-)-methyltransferase (254 aa).

Residues E82, E107, D134, and D157 each contribute to the S-adenosyl-L-methionine site. Residue D157 is part of the active site. Substrate-binding positions include K161, D193, and 233–236 (TKFE).

It belongs to the class I-like SAM-binding methyltransferase superfamily. TrmB family.

It catalyses the reaction guanosine(46) in tRNA + S-adenosyl-L-methionine = N(7)-methylguanosine(46) in tRNA + S-adenosyl-L-homocysteine. It participates in tRNA modification; N(7)-methylguanine-tRNA biosynthesis. Functionally, catalyzes the formation of N(7)-methylguanine at position 46 (m7G46) in tRNA. The polypeptide is tRNA (guanine-N(7)-)-methyltransferase (Corynebacterium jeikeium (strain K411)).